A 51-amino-acid polypeptide reads, in one-letter code: Putative inactivation escape 1 protein (51 aa).

In terms of tissue distribution, highly expressed in pancreas, heart and liver followed by brain, placenta, lung, skeletal muscle and kidney. Mostly expressed in females.

This Homo sapiens (Human) protein is Putative inactivation escape 1 protein (INE1).